A 112-amino-acid polypeptide reads, in one-letter code: 2Fe-2S ferredoxin (112 aa).

The 2Fe-2S ferredoxin-type domain occupies 1–104; the sequence is MPQIVILPHA…DLVVEIPKYT (104 aa). C42, C48, C51, and C87 together coordinate [2Fe-2S] cluster.

This sequence belongs to the adrenodoxin/putidaredoxin family. [2Fe-2S] cluster serves as cofactor.

Ferredoxin are iron-sulfur proteins that transfer electrons in a wide variety of metabolic reactions. The sequence is that of 2Fe-2S ferredoxin (fdx) from Pseudomonas aeruginosa (strain ATCC 15692 / DSM 22644 / CIP 104116 / JCM 14847 / LMG 12228 / 1C / PRS 101 / PAO1).